The primary structure comprises 812 residues: Collagen-like protein 5 (812 aa).

N13 and N83 each carry an N-linked (GlcNAc...) asparagine; by host glycan. 3 Collagen-like domains span residues 69–128 (GASG…KGDD), 143–502 (GEKG…KGDN), and 506–565 (GETG…KGEA). A disordered region spans residues 71–568 (SGAQGVKGDP…PGIKGEAGTN (498 aa)). Basic and acidic residues-rich tracts occupy residues 88–112 (TKGEKGDKGDKGSKGDNGEKGEKGD), 121–435 (SKGD…ETGS), 444–523 (SKGD…KGIK), and 531–561 (VKGDKGSKGDKGDLGDTGIKGDKGEKGDPGI). The N-linked (GlcNAc...) asparagine; by host glycan is linked to N502. Residues N637, N658, and N667 are each glycosylated (N-linked (GlcNAc...) asparagine; by host). The interval 730-802 (GQARTNGAST…VSASGGRGGD (73 aa)) is disordered. Gly residues predominate over residues 752 to 765 (FGGGGGGASGFAKG).

In terms of processing, may be hydroxylated on lysine by the viral-encoded procollagen-lysine,2-oxoglutarate 5-dioxygenase.

It is found in the virion. Functionally, may participate in the formation of a layer of cross-linked glycosylated fibrils at the viral surface thus giving it a hairy-like appearance. The protein is Collagen-like protein 5 of Acanthamoeba polyphaga (Amoeba).